A 414-amino-acid chain; its full sequence is 2,3-bisphosphoglycerate-independent phosphoglycerate mutase (414 aa).

The protein belongs to the BPG-independent phosphoglycerate mutase family. A-PGAM subfamily.

The catalysed reaction is (2R)-2-phosphoglycerate = (2R)-3-phosphoglycerate. It participates in carbohydrate degradation; glycolysis; pyruvate from D-glyceraldehyde 3-phosphate: step 3/5. Its function is as follows. Catalyzes the interconversion of 2-phosphoglycerate and 3-phosphoglycerate. The polypeptide is 2,3-bisphosphoglycerate-independent phosphoglycerate mutase (Saccharolobus islandicus (strain M.14.25 / Kamchatka #1) (Sulfolobus islandicus)).